The chain runs to 869 residues: Valine--tRNA ligase (869 aa).

Residues 47–57 carry the 'HIGH' region motif; it reads PYPTGNFHIGN. Positions 521-525 match the 'KMSKS' region motif; the sequence is KMSKS. Position 524 (lysine 524) interacts with ATP.

This sequence belongs to the class-I aminoacyl-tRNA synthetase family. ValS type 2 subfamily.

The protein resides in the cytoplasm. The catalysed reaction is tRNA(Val) + L-valine + ATP = L-valyl-tRNA(Val) + AMP + diphosphate. In terms of biological role, catalyzes the attachment of valine to tRNA(Val). As ValRS can inadvertently accommodate and process structurally similar amino acids such as threonine, to avoid such errors, it has a 'posttransfer' editing activity that hydrolyzes mischarged Thr-tRNA(Val) in a tRNA-dependent manner. In Methanosarcina mazei (strain ATCC BAA-159 / DSM 3647 / Goe1 / Go1 / JCM 11833 / OCM 88) (Methanosarcina frisia), this protein is Valine--tRNA ligase.